The primary structure comprises 1318 residues: Uromodulin-like 1 (1318 aa).

Residues methionine 1–alanine 21 form the signal peptide. Over serine 22 to tyrosine 1272 the chain is Extracellular. The EMI domain maps to glycine 33–leucine 106. Disulfide bonds link cysteine 37-cysteine 94, cysteine 61-cysteine 70, and cysteine 93-cysteine 104. Asparagine 89 carries an N-linked (GlcNAc...) asparagine glycan. The N-linked (GlcNAc...) asparagine glycan is linked to asparagine 109. Residues phenylalanine 114–alanine 158 enclose the WAP domain. Residue asparagine 172 is glycosylated (N-linked (GlcNAc...) asparagine). In terms of domain architecture, EGF-like 1; calcium-binding spans aspartate 264–proline 313. Positions proline 314–glutamine 398 constitute a Fibronectin type-III 1 domain. Asparagine 322, asparagine 335, and asparagine 417 each carry an N-linked (GlcNAc...) asparagine glycan. One can recognise an SEA 1 domain in the interval asparagine 396–glutamate 510. Residues aspartate 507–glutamate 552 form the EGF-like 2; calcium-binding domain. Disulfide bonds link cysteine 511–cysteine 525, cysteine 519–cysteine 534, and cysteine 536–cysteine 551. Asparagine 585 carries N-linked (GlcNAc...) asparagine glycosylation. The interval glycine 593 to histidine 655 is disordered. In terms of domain architecture, Fibronectin type-III 2 spans valine 702–lysine 791. Residue asparagine 713 is glycosylated (N-linked (GlcNAc...) asparagine). An SEA 2 domain is found at alanine 788–glutamate 900. Positions aspartate 897–glutamate 938 constitute an EGF-like 3; calcium-binding domain. 2 disulfide bridges follow: cysteine 901/cysteine 914 and cysteine 908/cysteine 923. The tract at residues glutamate 938–arginine 957 is disordered. Residues asparagine 984 and asparagine 1050 are each glycosylated (N-linked (GlcNAc...) asparagine). One can recognise a ZP domain in the interval leucine 992–phenylalanine 1235. Residues cysteine 1157 and cysteine 1215 are joined by a disulfide bond. Residues valine 1273 to valine 1293 form a helical membrane-spanning segment. Over arginine 1294–glutamate 1318 the chain is Cytoplasmic.

As to expression, isoform 4 is expressed at low level in kidney, testis and fetal thymus. Isoform 3 is expressed at low level in prostate, testis and fetal thymus.

The protein localises to the cell membrane. It is found in the cytoplasm. The chain is Uromodulin-like 1 (UMODL1) from Homo sapiens (Human).